We begin with the raw amino-acid sequence, 247 residues long: tRNA uridine(34) hydroxylase (247 aa).

The region spanning T124–N218 is the Rhodanese domain. C178 functions as the Cysteine persulfide intermediate in the catalytic mechanism.

The protein belongs to the TrhO family.

The enzyme catalyses uridine(34) in tRNA + AH2 + O2 = 5-hydroxyuridine(34) in tRNA + A + H2O. Its function is as follows. Catalyzes oxygen-dependent 5-hydroxyuridine (ho5U) modification at position 34 in tRNAs. The sequence is that of tRNA uridine(34) hydroxylase from Rickettsia typhi (strain ATCC VR-144 / Wilmington).